A 212-amino-acid polypeptide reads, in one-letter code: Thymidylate kinase (212 aa).

10–17 serves as a coordination point for ATP; it reads GGEGSGKT.

It belongs to the thymidylate kinase family.

It carries out the reaction dTMP + ATP = dTDP + ADP. Its function is as follows. Phosphorylation of dTMP to form dTDP in both de novo and salvage pathways of dTTP synthesis. This is Thymidylate kinase from Marinomonas sp. (strain MWYL1).